Reading from the N-terminus, the 542-residue chain is CTP synthase (542 aa).

An amidoligase domain region spans residues 1 to 265 (MARYVFITGG…DNEVLAAFGI (265 aa)). Ser-13 provides a ligand contact to CTP. Ser-13 contributes to the UTP binding site. ATP-binding positions include 14–19 (SLGKGI) and Asp-71. 2 residues coordinate Mg(2+): Asp-71 and Glu-139. Residues 146 to 148 (DIE), 186 to 191 (KTKPTQ), and Lys-222 each bind CTP. Residues 186-191 (KTKPTQ) and Lys-222 each bind UTP. The region spanning 291–541 (TIAIVGKYTG…IEAALEQSRL (251 aa)) is the Glutamine amidotransferase type-1 domain. Gly-353 is an L-glutamine binding site. Cys-380 (nucleophile; for glutamine hydrolysis) is an active-site residue. Residues 381–384 (FGMQ), Glu-404, and Arg-469 contribute to the L-glutamine site. Catalysis depends on residues His-514 and Glu-516.

The protein belongs to the CTP synthase family. Homotetramer.

The enzyme catalyses UTP + L-glutamine + ATP + H2O = CTP + L-glutamate + ADP + phosphate + 2 H(+). It carries out the reaction L-glutamine + H2O = L-glutamate + NH4(+). It catalyses the reaction UTP + NH4(+) + ATP = CTP + ADP + phosphate + 2 H(+). It participates in pyrimidine metabolism; CTP biosynthesis via de novo pathway; CTP from UDP: step 2/2. With respect to regulation, allosterically activated by GTP, when glutamine is the substrate; GTP has no effect on the reaction when ammonia is the substrate. The allosteric effector GTP functions by stabilizing the protein conformation that binds the tetrahedral intermediate(s) formed during glutamine hydrolysis. Inhibited by the product CTP, via allosteric rather than competitive inhibition. In terms of biological role, catalyzes the ATP-dependent amination of UTP to CTP with either L-glutamine or ammonia as the source of nitrogen. Regulates intracellular CTP levels through interactions with the four ribonucleotide triphosphates. This Sinorhizobium medicae (strain WSM419) (Ensifer medicae) protein is CTP synthase.